A 142-amino-acid polypeptide reads, in one-letter code: DNA-directed RNA polymerase II subunit RPB4 (142 aa).

Belongs to the eukaryotic RPB4 RNA polymerase subunit family. As to quaternary structure, component of the RNA polymerase II (Pol II) core complex consisting of 12 subunits: a ten-subunit catalytic core composed of POLR2A/RPB1, POLR2B/RPB2, POLR2C/RPB3, POLR2I/RPB9, POLR2J/RPB11, POLR2E/RPABC1, POLR2F/RPABC2, POLR2H/RPABC3, POLR2K/RPABC4 and POLR2L/RPABC5 and a mobile stalk composed of two subunits POLR2D/RPB4 and POLR2G/RPB7, protruding from the core and functioning primarily in transcription initiation. Part of Pol II(G) complex, in which Pol II core associates with an additional subunit POLR2M; unlike conventional Pol II, Pol II(G) functions as a transcriptional repressor. Part of TBP-based Pol II pre-initiation complex (PIC), in which Pol II core assembles with general transcription factors and other specific initiation factors including GTF2E1, GTF2E2, GTF2F1, GTF2F2, TCEA1, ERCC2, ERCC3, GTF2H2, GTF2H3, GTF2H4, GTF2H5, GTF2A1, GTF2A2, GTF2B and TBP; this large multi-subunit PIC complex mediates DNA unwinding and targets Pol II core to the transcription start site where the first phosphodiester bond forms.

It is found in the nucleus. Its function is as follows. Core component of RNA polymerase II (Pol II), a DNA-dependent RNA polymerase which synthesizes mRNA precursors and many functional non-coding RNAs using the four ribonucleoside triphosphates as substrates. Pol II is the central component of the basal RNA polymerase II transcription machinery. It is composed of mobile elements that move relative to each other. POLR2D/RPB4 is part of a subcomplex with POLR2G/RPB7 that binds to a pocket formed by POLR2A/RPB1, POLR2B/RPB2 and POLR2F/RPABC2 at the base of the clamp element. The POLR2D/RPB4-POLR2G/RPB7 subcomplex seems to lock the clamp via POLR2G/RPB7 in the closed conformation thus preventing double-stranded DNA to enter the active site cleft. The POLR2D/RPB4-POLR2G/RPB7 subcomplex binds single-stranded DNA and RNA. This Homo sapiens (Human) protein is DNA-directed RNA polymerase II subunit RPB4 (POLR2D).